A 444-amino-acid polypeptide reads, in one-letter code: Phosphoglucosamine mutase (444 aa).

Ser-104 (phosphoserine intermediate) is an active-site residue. Mg(2+) is bound by residues Ser-104, Asp-243, Asp-245, and Asp-247. The residue at position 104 (Ser-104) is a Phosphoserine.

Belongs to the phosphohexose mutase family. Mg(2+) is required as a cofactor. Post-translationally, activated by phosphorylation.

It catalyses the reaction alpha-D-glucosamine 1-phosphate = D-glucosamine 6-phosphate. Its function is as follows. Catalyzes the conversion of glucosamine-6-phosphate to glucosamine-1-phosphate. This Neisseria meningitidis serogroup C / serotype 2a (strain ATCC 700532 / DSM 15464 / FAM18) protein is Phosphoglucosamine mutase.